Reading from the N-terminus, the 426-residue chain is MDDSFDIYEIKARQVLDSRGNPTVEAEVLTAGGGYGHTIVPSGASTGTFEAVELRDATEKYGGKSVLNAVSNVNDIIAQELIGEDARNQRLIDQIMINLDGTENKGNLGANAILAVSLAVAKAAADTASLPLYKYIGGCNAYVMPAPMMNVLNGGQHAGNALDFQEFMIMPVGADSFAEAVRMCAETYQSLKKVVAEKYGKDAVNIGDEGGFAPPVKTIDEALALLLEGVKRAGYEDEIVFTLDSAASEFYDEKSGSYIVAGEKVSTDKLIDIYKEMVAQYPIVSIEDPLFEEDFEGFTKATKELKGIQIVGDDLFVTNTKRLKKGIEMGASNSLLLKVNQIGTLSESIDAANMAFRNGYSLVVSHRSGESEDSTIADLAVALNSGQIKTGAPARGERTAKYNQLIRIEEELQISKYAGKDFKVPF.

Gln-165 is a (2R)-2-phosphoglycerate binding site. The active-site Proton donor is the Glu-209. Residues Asp-244, Glu-287, and Asp-313 each coordinate Mg(2+). The (2R)-2-phosphoglycerate site is built by Lys-338, Arg-367, Ser-368, and Lys-389. Lys-338 functions as the Proton acceptor in the catalytic mechanism.

This sequence belongs to the enolase family. Mg(2+) is required as a cofactor.

It is found in the cytoplasm. It localises to the secreted. The protein localises to the cell surface. The enzyme catalyses (2R)-2-phosphoglycerate = phosphoenolpyruvate + H2O. Its pathway is carbohydrate degradation; glycolysis; pyruvate from D-glyceraldehyde 3-phosphate: step 4/5. Its function is as follows. Catalyzes the reversible conversion of 2-phosphoglycerate (2-PG) into phosphoenolpyruvate (PEP). It is essential for the degradation of carbohydrates via glycolysis. The protein is Enolase of Methanococcus maripaludis (strain C5 / ATCC BAA-1333).